Reading from the N-terminus, the 124-residue chain is Ribonuclease pancreatic (124 aa).

Positions 1–13 are enriched in basic and acidic residues; it reads KESAAAKFERQHM. Positions 1–23 are disordered; that stretch reads KESAAAKFERQHMDPSASSISSS. Residues lysine 7 and arginine 10 each coordinate substrate. Histidine 12 acts as the Proton acceptor in catalysis. 4 disulfides stabilise this stretch: cysteine 26–cysteine 84, cysteine 40–cysteine 95, cysteine 58–cysteine 110, and cysteine 65–cysteine 72. Residue asparagine 34 is glycosylated (N-linked (GlcNAc...) asparagine). Substrate is bound by residues 41 to 45, lysine 66, and arginine 85; that span reads KPVNT. The Proton donor role is filled by histidine 119.

Belongs to the pancreatic ribonuclease family. Monomer. Interacts with and forms tight 1:1 complexes with RNH1. Dimerization of two such complexes may occur. Interaction with RNH1 inhibits this protein. Pancreas.

It localises to the secreted. The catalysed reaction is an [RNA] containing cytidine + H2O = an [RNA]-3'-cytidine-3'-phosphate + a 5'-hydroxy-ribonucleotide-3'-[RNA].. It carries out the reaction an [RNA] containing uridine + H2O = an [RNA]-3'-uridine-3'-phosphate + a 5'-hydroxy-ribonucleotide-3'-[RNA].. Functionally, endonuclease that catalyzes the cleavage of RNA on the 3' side of pyrimidine nucleotides. Acts on single-stranded and double-stranded RNA. In Alces alces alces (European moose), this protein is Ribonuclease pancreatic (RNASE1).